A 684-amino-acid polypeptide reads, in one-letter code: Sec1 family domain-containing protein 2 (684 aa).

Belongs to the STXBP/unc-18/SEC1 family.

Its function is as follows. May be involved in protein transport. This Homo sapiens (Human) protein is Sec1 family domain-containing protein 2 (SCFD2).